Consider the following 891-residue polypeptide: Tubulin polyglutamylase TTLL6 (891 aa).

2 disordered regions span residues 1–25 (MGALLLHPSRRGPAGVVASWTSSPA) and 44–106 (SQAR…KRKK). The span at 63–76 (SEEKGDSSKEDPKE) shows a compositional bias: basic and acidic residues. Residues 88–99 (GAQNGLQNAQQQ) are compositionally biased toward low complexity. The 344-residue stretch at 106 to 449 (KKRLVINLSS…ESCDKKKVLE (344 aa)) folds into the TTL domain. ATP contacts are provided by residues lysine 223, 229 to 230 (QG), 251 to 254 (QLYI), and 264 to 266 (KFD). An a protein-binding site is contributed by glutamine 229. Arginine 290 lines the L-glutamate pocket. 312-313 (TN) lines the ATP pocket. L-glutamate is bound by residues tyrosine 314, serine 315, and lysine 332. Residues aspartate 395, glutamate 408, and asparagine 410 each coordinate Mg(2+). Histidine 411 contributes to the a protein binding site. The tract at residues 420–499 (RLDKEVKDGL…CGGFRLIYPS (80 aa)) is c-MTBD region. An L-glutamate-binding site is contributed by lysine 426. Disordered stretches follow at residues 546-584 (QMKKKVEMQGESAGEQVRKKGMRGWQQKQQQKDKAATQA), 607-636 (GERKNETDSSLNQEAPTEEASSVFPKLTSA), 687-711 (TTPESTTQLSISPKSPPTLAVTASS), and 800-820 (NNLSQNPSLPGECHSRSDSSG). Polar residues predominate over residues 687 to 699 (TTPESTTQLSISP).

Belongs to the tubulin--tyrosine ligase family. In terms of assembly, found in a complex with CEP41. The cofactor is Mg(2+).

Its subcellular location is the cytoplasm. The protein resides in the cytoskeleton. It is found in the cilium axoneme. The protein localises to the cilium basal body. It carries out the reaction L-glutamyl-[protein] + L-glutamate + ATP = gamma-L-glutamyl-L-glutamyl-[protein] + ADP + phosphate + H(+). It catalyses the reaction (L-glutamyl)(n)-gamma-L-glutamyl-L-glutamyl-[protein] + L-glutamate + ATP = (L-glutamyl)(n+1)-gamma-L-glutamyl-L-glutamyl-[protein] + ADP + phosphate + H(+). Its function is as follows. Polyglutamylase which modifies both tubulin and non-tubulin proteins, generating alpha-linked polyglutamate side chains on the gamma-carboxyl group of specific glutamate residues of target proteins. Preferentially mediates ATP-dependent long polyglutamate chain elongation over the initiation step of the polyglutamylation reaction. Preferentially modifies the alpha-tubulin tail over a beta-tail. Promotes tubulin polyglutamylation which stimulates spastin/SPAST-mediated microtubule severing, thereby regulating microtubule functions. Mediates microtubule polyglutamylation in primary cilia axoneme, which is important for ciliary structural formation and motility. Mediates microtubule polyglutamylation in motile cilia, necessary for the regulation of ciliary coordinated beating. Polyglutamylates non-tubulin protein nucleotidyltransferase CGAS, leading to CGAS DNA-binding inhibition, thereby preventing antiviral defense response. The protein is Tubulin polyglutamylase TTLL6 of Homo sapiens (Human).